A 424-amino-acid polypeptide reads, in one-letter code: Light-independent protochlorophyllide reductase subunit N (424 aa).

[4Fe-4S] cluster is bound by residues cysteine 16, cysteine 41, and cysteine 102.

Belongs to the BchN/ChlN family. Protochlorophyllide reductase is composed of three subunits; ChlL, ChlN and ChlB. Forms a heterotetramer of two ChlB and two ChlN subunits. [4Fe-4S] cluster is required as a cofactor.

The catalysed reaction is chlorophyllide a + oxidized 2[4Fe-4S]-[ferredoxin] + 2 ADP + 2 phosphate = protochlorophyllide a + reduced 2[4Fe-4S]-[ferredoxin] + 2 ATP + 2 H2O. It functions in the pathway porphyrin-containing compound metabolism; chlorophyll biosynthesis (light-independent). Component of the dark-operative protochlorophyllide reductase (DPOR) that uses Mg-ATP and reduced ferredoxin to reduce ring D of protochlorophyllide (Pchlide) to form chlorophyllide a (Chlide). This reaction is light-independent. The NB-protein (ChlN-ChlB) is the catalytic component of the complex. In Synechococcus sp. (strain WH7803), this protein is Light-independent protochlorophyllide reductase subunit N.